Consider the following 382-residue polypeptide: Sphingosine kinase 1 (382 aa).

The 148-residue stretch at 12–159 folds into the DAGKc domain; sequence PRPCRVLVLL…MNLLSLHTAS (148 aa). ATP-binding positions include 22 to 24 and 54 to 58; these read NPQ and TERKN. 79–82 contacts substrate; it reads SGDG. The Proton donor/acceptor role is filled by Asp81. ATP-binding positions include Glu86 and 111–113; that span reads GSG. Short sequence motifs (nuclear export signal) lie at residues 147-155 and 161-169; these read LSPMNLLSL and LRLYSVLSL. Residue Asp178 coordinates substrate. Residues Arg185 and Arg191 each coordinate ATP. Thr193 bears the Phosphothreonine mark. At Ser225 the chain carries Phosphoserine. Residue 340-342 coordinates ATP; sequence DGE.

Interacts with ACY1. Binds to calmodulin. Interacts with SPHKAP. Interacts with CIB1, the interaction occurs in a calcium-dependent manner. Interacts with TRAF2. Interacts with EEF1A1; the interaction enhances SPHK1 kinase activity. Mg(2+) serves as cofactor. In terms of tissue distribution, widely expressed. Expressed in brain (at protein level). Detected in neurons.

It is found in the cytoplasm. The protein resides in the endosome membrane. Its subcellular location is the nucleus. The protein localises to the cell membrane. It localises to the synapse. It carries out the reaction a sphingoid base + ATP = a sphingoid 1-phosphate + ADP + H(+). It catalyses the reaction L-seryl-[protein] + acetyl-CoA = O-acetyl-L-seryl-[protein] + CoA. The catalysed reaction is sphinganine + ATP = sphinganine 1-phosphate + ADP + H(+). The enzyme catalyses sphing-4-enine + ATP = sphing-4-enine 1-phosphate + ADP + H(+). It carries out the reaction 1-O-hexadecyl-2-amino-sn-glycerol + ATP = 1-O-hexadecyl-2-desoxy-2-amino-sn-glycero-3-phosphate + ADP + H(+). Its activity is regulated as follows. Acetyltransferase activity increases in presence of the kinase substrate, sphingosine. In Purkinje cells, kinase activity on sphingosine increases in presence of VEGFA. In neurons, kinase activity increases during the first 24h in presence of Amyloid-beta protein 42 to decrease after 96h. Functionally, catalyzes the phosphorylation of sphingosine to form sphingosine 1-phosphate (SPP), a lipid mediator with both intra- and extracellular functions. Also acts on D-erythro-sphingosine and to a lesser extent sphinganine, but not other lipids, such as D,L-threo-dihydrosphingosine, N,N-dimethylsphingosine, diacylglycerol, ceramide, or phosphatidylinositol. In contrast to proapoptotic SPHK2, has a negative effect on intracellular ceramide levels, enhances cell growth and inhibits apoptosis. Involved in the regulation of inflammatory response and neuroinflammation. Via the product sphingosine 1-phosphate, stimulates TRAF2 E3 ubiquitin ligase activity, and promotes activation of NF-kappa-B in response to TNF signaling. In response to TNF and in parallel to NF-kappa-B activation, negatively regulates RANTES induction through p38 MAPK signaling pathway. Involved in endocytic membrane trafficking induced by sphingosine, recruited to dilate endosomes, also plays a role on later stages of endosomal maturation and membrane fusion independently of its kinase activity. In Purkinje cells, seems to be also involved in the regulation of autophagosome-lysosome fusion upon VEGFA. In terms of biological role, has serine acetyltransferase activity on PTGS2/COX2 in an acetyl-CoA dependent manner. The acetyltransferase activity increases in presence of the kinase substrate, sphingosine. During neuroinflammation, through PTGS2 acetylation, promotes neuronal secretion of specialized preresolving mediators (SPMs), especially 15-R-lipoxin A4, which results in an increase of phagocytic microglia. The chain is Sphingosine kinase 1 from Mus musculus (Mouse).